A 218-amino-acid chain; its full sequence is Small ribosomal subunit protein uS3c (218 aa).

One can recognise a KH type-2 domain in the interval 43-118 (IKNYVQKNTK…KFNIAITKIA (76 aa)).

It belongs to the universal ribosomal protein uS3 family. In terms of assembly, part of the 30S ribosomal subunit.

The protein localises to the plastid. Its subcellular location is the chloroplast. This chain is Small ribosomal subunit protein uS3c (rps3), found in Coffea arabica (Arabian coffee).